A 156-amino-acid chain; its full sequence is Cell division protein SepF (156 aa).

The tract at residues 17-44 (PETADYYEDQQPAQQAPAPVPTPAPTRS) is disordered.

The protein belongs to the SepF family. In terms of assembly, homodimer. Interacts with FtsZ.

Its subcellular location is the cytoplasm. Functionally, cell division protein that is part of the divisome complex and is recruited early to the Z-ring. Probably stimulates Z-ring formation, perhaps through the cross-linking of FtsZ protofilaments. Its function overlaps with FtsA. This is Cell division protein SepF from Limosilactobacillus fermentum (strain NBRC 3956 / LMG 18251) (Lactobacillus fermentum).